A 405-amino-acid polypeptide reads, in one-letter code: Eukaryotic initiation factor 4A (405 aa).

Positions 31–59 (ECFEALNLEGDLLRGIFAYGFEKPSAIQQ) match the Q motif motif. A Helicase ATP-binding domain is found at 62–232 (IKPILDGYDT…TQFMRDPKRI (171 aa)). An ATP-binding site is contributed by 75-82 (AQSGTGKT). The DEAD box signature appears at 180–183 (DEAD). In terms of domain architecture, Helicase C-terminal spans 243 to 404 (GIRQFYVGVE…EMPMGITDIL (162 aa)).

This sequence belongs to the DEAD box helicase family. eIF4A subfamily. EIF4F is a multi-subunit complex, the composition of which varies with external and internal environmental conditions. It is composed of at least EIF4A, EIF4E and EIF4G.

It catalyses the reaction ATP + H2O = ADP + phosphate + H(+). Functionally, ATP-dependent RNA helicase which is a subunit of the eIF4F complex involved in cap recognition and is required for mRNA binding to ribosome. In the current model of translation initiation, eIF4A unwinds RNA secondary structures in the 5'-UTR of mRNAs which is necessary to allow efficient binding of the small ribosomal subunit, and subsequent scanning for the initiator codon. The protein is Eukaryotic initiation factor 4A (EIF4-A) of Cryptosporidium parvum.